The chain runs to 787 residues: GPI ethanolamine phosphate transferase 2 (787 aa).

N-linked (GlcNAc...) asparagine glycosylation is found at N33, N185, and N397. Transmembrane regions (helical) follow at residues 400-420 (FLTYGTTLMIIGTLIVTVWNF), 426-446 (YIEHVGTSVLLGISMFASSFI), and 455-475 (WITISVLLLMQISNGKKLVVL). The N-linked (GlcNAc...) asparagine glycan is linked to N485. Helical transmembrane passes span 504 to 524 (HTSVLWWLNVVTFLSVGFPFL) and 536 to 556 (LLSVSFLALSSITYKICFAIV). N581 is a glycosylation site (N-linked (GlcNAc...) asparagine). Residues 591–611 (LVPIARIFFQICGVSIIILLF) traverse the membrane as a helical segment. N617 carries N-linked (GlcNAc...) asparagine glycosylation. The chain crosses the membrane as a helical span at residues 629–651 (VIKFVLLLQTSSANIPLFLIFEI). An N-linked (GlcNAc...) asparagine glycan is attached at N669. Helical transmembrane passes span 671-693 (TFFQFGGTNSIATVNLTNAYNGV), 699-719 (IYVVGVLMFLSNYAPSIYWAL), 740-760 (GTCLMIACIALRYHLFIWSVF), and 767-787 (YAAWSLYNVVMDFAITLLGVL).

Belongs to the PIGG/PIGN/PIGO family. PIGG subfamily.

It is found in the endoplasmic reticulum membrane. It functions in the pathway glycolipid biosynthesis; glycosylphosphatidylinositol-anchor biosynthesis. In terms of biological role, ethanolamine phosphate transferase involved in glycosylphosphatidylinositol-anchor biosynthesis. Transfers ethanolamine phosphate to the GPI second mannose. The sequence is that of GPI ethanolamine phosphate transferase 2 (LAS21) from Kluyveromyces lactis (strain ATCC 8585 / CBS 2359 / DSM 70799 / NBRC 1267 / NRRL Y-1140 / WM37) (Yeast).